We begin with the raw amino-acid sequence, 248 residues long: Triosephosphate isomerase (248 aa).

9 to 11 provides a ligand contact to substrate; that stretch reads NWK. The active-site Electrophile is the histidine 94. Residue glutamate 166 is the Proton acceptor of the active site. Residues glycine 172, serine 212, and 233 to 234 each bind substrate; that span reads GG.

This sequence belongs to the triosephosphate isomerase family. In terms of assembly, homodimer.

It localises to the cytoplasm. The catalysed reaction is D-glyceraldehyde 3-phosphate = dihydroxyacetone phosphate. The protein operates within carbohydrate biosynthesis; gluconeogenesis. Its pathway is carbohydrate degradation; glycolysis; D-glyceraldehyde 3-phosphate from glycerone phosphate: step 1/1. Its function is as follows. Involved in the gluconeogenesis. Catalyzes stereospecifically the conversion of dihydroxyacetone phosphate (DHAP) to D-glyceraldehyde-3-phosphate (G3P). The polypeptide is Triosephosphate isomerase (Clostridium botulinum (strain Loch Maree / Type A3)).